A 644-amino-acid polypeptide reads, in one-letter code: Phosphomethylpyrimidine synthase (644 aa).

Residues Asn-236, Met-265, Tyr-294, His-330, 350–352 (SRG), 391–394 (DGLR), and Glu-430 contribute to the substrate site. His-434 contributes to the Zn(2+) binding site. Tyr-457 serves as a coordination point for substrate. Residue His-498 coordinates Zn(2+). Residues Cys-578, Cys-581, and Cys-586 each contribute to the [4Fe-4S] cluster site. The interval 623–644 (RQKSEEFKASGSELYHPAVEAE) is disordered.

This sequence belongs to the ThiC family. In terms of assembly, homodimer. Requires [4Fe-4S] cluster as cofactor.

The catalysed reaction is 5-amino-1-(5-phospho-beta-D-ribosyl)imidazole + S-adenosyl-L-methionine = 4-amino-2-methyl-5-(phosphooxymethyl)pyrimidine + CO + 5'-deoxyadenosine + formate + L-methionine + 3 H(+). It participates in cofactor biosynthesis; thiamine diphosphate biosynthesis. Its function is as follows. Catalyzes the synthesis of the hydroxymethylpyrimidine phosphate (HMP-P) moiety of thiamine from aminoimidazole ribotide (AIR) in a radical S-adenosyl-L-methionine (SAM)-dependent reaction. This is Phosphomethylpyrimidine synthase from Aliivibrio fischeri (strain MJ11) (Vibrio fischeri).